The sequence spans 392 residues: ATP phosphoribosyltransferase regulatory subunit (392 aa).

It belongs to the class-II aminoacyl-tRNA synthetase family. HisZ subfamily. As to quaternary structure, heteromultimer composed of HisG and HisZ subunits.

It localises to the cytoplasm. It functions in the pathway amino-acid biosynthesis; L-histidine biosynthesis; L-histidine from 5-phospho-alpha-D-ribose 1-diphosphate: step 1/9. Its function is as follows. Required for the first step of histidine biosynthesis. May allow the feedback regulation of ATP phosphoribosyltransferase activity by histidine. In Prochlorococcus marinus (strain MIT 9303), this protein is ATP phosphoribosyltransferase regulatory subunit.